The primary structure comprises 1462 residues: MGQIFPRSANPIPRPPRGLATHHWLNFLQAAYRLEPGPSSYDFHQLKTVLKMALETPVWMCPINYSLLASLLPKGYPGQVNEILQVLIQTQTQIPSHPAPPPPSSPTHDPPDSDPQIPPPYVEPTAPQVLPVMHPHGVPPTHRPWQMKDLQAIKQEVSQAAPGSPQFMQTIRLAVQQFDPTAKDLQDLLQYLCSSLVASLHHQQLDSLISEAETRGITGYNPLAGPLRVQANNPQQQGLRREYQQLWLTAFAALPGSAKDPSWASILQGLEEPYHTFVERLNVALDNGLPEGTPKDPILRSLAYSNANKECQKLLQARGHTNSPLGDMLRACQAWTPRDKTKVLVVQPKKPPPNQPCFRCGKAGHWSRDCAQPRPPPGPCPLCQDPTHWKRDCPRLKPAIPEPEPEEDALLLDLPADIPHPKNLHRGGGLTSPPTLRQVHPNKDPASILPVIPLDPARRPLIKAQVDTQTSHPRTIEALLDTGADMTVLPIALFSSDTPLKDTSVLGAGGQTQDHFKLTSLPVLIRLPFRTTPIVLTSCLVDTKNNWAIIGRDALQQCQGVLYLPEAKRPPVILPIQAPAVLGLEHLPRPPEISQFPLNPERLQALQHLVRKALEAGHIEPYTGPGNNPVFPVKKANGTWRFIHDLRATNSLTVDLSSSSPGPPDLSSLPTTLAHLQTIDLKDAFFQIPLPKQFQPYFAFTVPQQCNYGPGTRYAWKVLPQGFKNSPTLFEMQLASILQPIRQAFPQCVILQYMDDILLASPSPEDLQQLSEATMASLISHGLPVSQDKTQQTPGTIKFLGQIISPNHITYDAVPTVPIRSRWALPELQALLGEIQWVSKGTPTLRQPLHSLYCALQGHTDPRDQIYLNPSQVQSLMQLQQALSQNCRSRLAQTLPLLGAIMLTLTGTTTVVFQSKQQWPLVWLHAPLPHTSQCPWGQLLASAVLLLDKYTLQSYGLLCQTIHHNISIQTFNQFIQTSDHPSVPILLHHSHRFKNLGAQTGELWNTFLKTAAPLAPVKALTPVFTLSPIIINTAPCLFSDGSTSQAAYILWDKHILSQRSFPLPPPHKSAQQAELLGLLHGLSSARSWHCLNIFLDSKYLYHYLRTLALGTFQGKSSQAPFQALLPRLLAHKVIYLHHVRSHTNLPDPISKLNALTDALLITPILQLSPAELHSFTHCGQTALTLQGATTTEASNILRSCHACRKNNPQHQMPRGHIRRGLLPNHIWQGDITHFKYKNTLYRLHVWVDTFSGAISATQKRKETSSEAISSLLQAIAQLGKPSYINTDNGPAYISQDFLSMCTSLAIRHTTHVPYNPTSSGLVERSNGILKTLLYKYFTDRPDLPMDNALSIALWTINHLNVLTHCHKTRWQLHHSPRLQPIPETHSLISKQTHWYYFKLPGLNSRQWKGPQEALQEAAGAALIPVSANSAQWIPWRLLKQAACPRPAEGPADPKEKDHQHHG.

Gly2 carries N-myristoyl glycine; by host lipidation. Residues 93–143 are disordered; that stretch reads QIPSHPAPPPPSSPTHDPPDSDPQIPPPYVEPTAPQVLPVMHPHGVPPTHR. Position 105 is a phosphoserine; by host MAPK1 (Ser105). The short motif at 118–121 is the PPXY motif element; sequence PPPY. Positions 124-127 match the PTAP/PSAP motif motif; sequence PTAP. 2 CCHC-type zinc fingers span residues 355–372 and 378–395; these read QPCFRCGKAGHWSRDCAQ and GPCPLCQDPTHWKRDCPR. The Peptidase A2 domain occupies 476 to 554; it reads IEALLDTGAD…NNWAIIGRDA (79 aa). Asp481 acts as the For protease activity; shared with dimeric partner in catalysis. The Reverse transcriptase domain maps to 614-804; sequence LEAGHIEPYT…GTIKFLGQII (191 aa). Residues Asp680, Asp755, Asp756, Asp1040, Glu1074, Asp1096, Asp1157, Asp1230, and Asp1287 each contribute to the Mg(2+) site. The RNase H type-1 domain occupies 1031-1165; sequence INTAPCLFSD…TDALLITPIL (135 aa). An Integrase catalytic domain is found at 1219-1388; sequence RGLLPNHIWQ…QPIPETHSLI (170 aa). The segment at residues 1393 to 1443 is a DNA-binding region (integrase-type); that stretch reads HWYYFKLPGLNSRQWKGPQEALQEAAGAALIPVSANSAQWIPWRLLKQAAC.

Homodimer; the homodimers are part of the immature particles. Interacts with human TSG101 and NEDD4; these interactions are essential for budding and release of viral particles. As to quaternary structure, homodimer; further assembles as homohexamers. Mg(2+) serves as cofactor. Post-translationally, phosphorylation of the matrix protein p19 by MAPK1 seems to play a role in budding. In terms of processing, myristoylated. Myristoylation of the matrix (MA) domain mediates the transport and binding of Gag polyproteins to the host plasma membrane and is required for the assembly of viral particles. Specific enzymatic cleavages by the viral protease yield mature proteins. The polyprotein is cleaved during and after budding, this process is termed maturation. The protease is autoproteolytically processed at its N- and C-termini.

The protein resides in the virion. The catalysed reaction is Endonucleolytic cleavage to 5'-phosphomonoester.. It carries out the reaction DNA(n) + a 2'-deoxyribonucleoside 5'-triphosphate = DNA(n+1) + diphosphate. Its function is as follows. The matrix domain targets Gag, Gag-Pro and Gag-Pro-Pol polyproteins to the plasma membrane via a multipartite membrane binding signal, that includes its myristoylated N-terminus. In terms of biological role, matrix protein. Functionally, forms the spherical core of the virus that encapsulates the genomic RNA-nucleocapsid complex. Binds strongly to viral nucleic acids and promote their aggregation. Also destabilizes the nucleic acids duplexes via highly structured zinc-binding motifs. Its function is as follows. The aspartyl protease mediates proteolytic cleavages of Gag and Gag-Pol polyproteins during or shortly after the release of the virion from the plasma membrane. Cleavages take place as an ordered, step-wise cascade to yield mature proteins. This process is called maturation. Displays maximal activity during the budding process just prior to particle release from the cell (Potential). Cleaves the translation initiation factor eIF4G leading to the inhibition of host cap-dependent translation. In terms of biological role, RT is a multifunctional enzyme that converts the viral RNA genome into dsDNA in the cytoplasm, shortly after virus entry into the cell. This enzyme displays a DNA polymerase activity that can copy either DNA or RNA templates, and a ribonuclease H (RNase H) activity that cleaves the RNA strand of RNA-DNA heteroduplexes in a partially processive 3' to 5'-endonucleasic mode. Conversion of viral genomic RNA into dsDNA requires many steps. A tRNA-Pro binds to the primer-binding site (PBS) situated at the 5'-end of the viral RNA. RT uses the 3' end of the tRNA primer to perform a short round of RNA-dependent minus-strand DNA synthesis. The reading proceeds through the U5 region and ends after the repeated (R) region which is present at both ends of viral RNA. The portion of the RNA-DNA heteroduplex is digested by the RNase H, resulting in a ssDNA product attached to the tRNA primer. This ssDNA/tRNA hybridizes with the identical R region situated at the 3' end of viral RNA. This template exchange, known as minus-strand DNA strong stop transfer, can be either intra- or intermolecular. RT uses the 3' end of this newly synthesized short ssDNA to perform the RNA-dependent minus-strand DNA synthesis of the whole template. RNase H digests the RNA template except for a polypurine tract (PPT) situated at the 5' end of the genome. It is not clear if both polymerase and RNase H activities are simultaneous. RNase H probably can proceed both in a polymerase-dependent (RNA cut into small fragments by the same RT performing DNA synthesis) and a polymerase-independent mode (cleavage of remaining RNA fragments by free RTs). Secondly, RT performs DNA-directed plus-strand DNA synthesis using the PPT that has not been removed by RNase H as primer. PPT and tRNA primers are then removed by RNase H. The 3' and 5' ssDNA PBS regions hybridize to form a circular dsDNA intermediate. Strand displacement synthesis by RT to the PBS and PPT ends produces a blunt ended, linear dsDNA copy of the viral genome that includes long terminal repeats (LTRs) at both ends. Functionally, catalyzes viral DNA integration into the host chromosome, by performing a series of DNA cutting and joining reactions. The chain is Gag-Pro-Pol polyprotein (gag-pro-pol) from Homo sapiens (Human).